The sequence spans 459 residues: Bifunctional protein GlmU (459 aa).

A pyrophosphorylase region spans residues 1 to 230 (MVKRYAVILA…FEETIGVNDR (230 aa)). UDP-N-acetyl-alpha-D-glucosamine contacts are provided by residues 9-12 (LAAG), Lys23, Gln73, and 78-79 (GT). Asp103 is a binding site for Mg(2+). UDP-N-acetyl-alpha-D-glucosamine-binding residues include Gly140, Glu155, Asn170, and Asn228. Residue Asn228 coordinates Mg(2+). The tract at residues 231 to 251 (VALAEAEKIMRERICRKHMMN) is linker. The segment at 252–459 (GVTIIDPAHT…VDRLSIKKNS (208 aa)) is N-acetyltransferase. Arg333 and Lys351 together coordinate UDP-N-acetyl-alpha-D-glucosamine. The Proton acceptor role is filled by His363. Residues Tyr366 and Asn377 each coordinate UDP-N-acetyl-alpha-D-glucosamine. Residues 386–387 (NY), Ala423, and Arg440 each bind acetyl-CoA.

This sequence in the N-terminal section; belongs to the N-acetylglucosamine-1-phosphate uridyltransferase family. In the C-terminal section; belongs to the transferase hexapeptide repeat family. Homotrimer. Mg(2+) serves as cofactor.

The protein resides in the cytoplasm. It catalyses the reaction alpha-D-glucosamine 1-phosphate + acetyl-CoA = N-acetyl-alpha-D-glucosamine 1-phosphate + CoA + H(+). It carries out the reaction N-acetyl-alpha-D-glucosamine 1-phosphate + UTP + H(+) = UDP-N-acetyl-alpha-D-glucosamine + diphosphate. It functions in the pathway nucleotide-sugar biosynthesis; UDP-N-acetyl-alpha-D-glucosamine biosynthesis; N-acetyl-alpha-D-glucosamine 1-phosphate from alpha-D-glucosamine 6-phosphate (route II): step 2/2. Its pathway is nucleotide-sugar biosynthesis; UDP-N-acetyl-alpha-D-glucosamine biosynthesis; UDP-N-acetyl-alpha-D-glucosamine from N-acetyl-alpha-D-glucosamine 1-phosphate: step 1/1. The protein operates within bacterial outer membrane biogenesis; LPS lipid A biosynthesis. Catalyzes the last two sequential reactions in the de novo biosynthetic pathway for UDP-N-acetylglucosamine (UDP-GlcNAc). The C-terminal domain catalyzes the transfer of acetyl group from acetyl coenzyme A to glucosamine-1-phosphate (GlcN-1-P) to produce N-acetylglucosamine-1-phosphate (GlcNAc-1-P), which is converted into UDP-GlcNAc by the transfer of uridine 5-monophosphate (from uridine 5-triphosphate), a reaction catalyzed by the N-terminal domain. The sequence is that of Bifunctional protein GlmU from Geobacillus sp. (strain WCH70).